Reading from the N-terminus, the 1114-residue chain is WD repeat-containing protein 72 (1114 aa).

7 WD repeats span residues A15 to A54, G60 to K102, K160 to Q197, E327 to D373, G413 to L452, G470 to T515, and K566 to H605. 2 disordered regions span residues S634–P658 and S749–K798. Positions K780–P796 are enriched in basic residues. 2 positions are modified to phosphoserine: S1093 and S1095.

Expressed in maturation stage ameloblasts (at protein level).

It is found in the cytoplasmic vesicle. Plays a major role in formation of tooth enamel. Specifically required during the maturation phase of amelogenesis for normal formation of the enamel matrix and clearance of enamel proteins. May be involved in localization of the calcium transporter SLC24A4 to the ameloblast cell membrane. The polypeptide is WD repeat-containing protein 72 (Mus musculus (Mouse)).